A 152-amino-acid chain; its full sequence is UPF0266 membrane protein YobD (152 aa).

A run of 3 helical transmembrane segments spans residues 6–26 (LVLILFIAALLAFAIYDQFIM), 45–65 (IDSVIFVGLIVILIYNNVTNH), and 67–87 (ALITTWLLSALALMGFYIFWI).

This sequence belongs to the UPF0266 family.

The protein resides in the cell inner membrane. This Shigella dysenteriae serotype 1 (strain Sd197) protein is UPF0266 membrane protein YobD.